The sequence spans 251 residues: Segregation and condensation protein A (251 aa).

It belongs to the ScpA family. As to quaternary structure, component of a cohesin-like complex composed of ScpA, ScpB and the Smc homodimer, in which ScpA and ScpB bind to the head domain of Smc. The presence of the three proteins is required for the association of the complex with DNA.

It is found in the cytoplasm. Its function is as follows. Participates in chromosomal partition during cell division. May act via the formation of a condensin-like complex containing Smc and ScpB that pull DNA away from mid-cell into both cell halves. In Exiguobacterium sibiricum (strain DSM 17290 / CCUG 55495 / CIP 109462 / JCM 13490 / 255-15), this protein is Segregation and condensation protein A.